We begin with the raw amino-acid sequence, 88 residues long: Auxin-responsive protein SAUR21 (88 aa).

The protein belongs to the ARG7 family.

The protein localises to the cell membrane. Its function is as follows. Functions as a positive effector of cell expansion through modulation of auxin transport. The chain is Auxin-responsive protein SAUR21 from Arabidopsis thaliana (Mouse-ear cress).